Reading from the N-terminus, the 1801-residue chain is Protein mono-ADP-ribosyltransferase PARP14 (1801 aa).

Residue serine 33 is modified to Phosphoserine. Residues 109–132 (SKTKEDVKEPDVSEELDTKLPLDG) form a disordered region. Macro domains follow at residues 791–978 (KCFS…KTVF), 1003–1190 (WEKG…ARRA), and 1216–1387 (DSGV…KKRE). A glycoprotein-binding positions include asparagine 824, leucine 833, 922–926 (SSGVF), aspartate 961, 1023–1024 (VQ), serine 1034, 1046–1049 (LSKS), 1133–1137 (GTGNL), 1175–1178 (DHEN), 1235–1236 (DI), serine 1247, valine 1258, 1332–1336 (GTGNA), and phenylalanine 1371. Residues serine 1403 and serine 1411 each carry the phosphoserine modification. The 79-residue stretch at 1523 to 1601 (EQESRADCIS…SLSVQRLTKS (79 aa)) folds into the WWE domain. A PARP catalytic domain is found at 1605-1801 (IPAHWSDMKQ…YPEYLITFRK (197 aa)).

It belongs to the ARTD/PARP family. In terms of assembly, interacts with STAT6. Interacts with PARP10. Interacts with PARP9 in IFNG-stimulated macrophages; the interaction prevents PARP14-mediated STAT1 and STAT6 ADP-riboslylation. Auto-ADP-ribosylated. Expressed in macrophages.

It is found in the nucleus. Its subcellular location is the cytoplasm. It catalyses the reaction L-glutamyl-[protein] + NAD(+) = 5-O-(ADP-D-ribosyl)-L-glutamyl-[protein] + nicotinamide. ADP-ribosyltransferase that mediates mono-ADP-ribosylation of glutamate residues on target proteins. In contrast to PARP1 and PARP2, it is not able to mediate poly-ADP-ribosylation. Has been shown to catalyze the mono-ADP-ribosylation of STAT1 at 'Glu-657' and 'Glu-705', thus decreasing STAT1 phosphorylation which negatively regulates pro-inflammatory cytokine production in macrophages in response to IFNG stimulation. However, the role of ADP-ribosylation in the prevention of STAT1 phosphorylation has been called into question and it has been suggested that the inhibition of phosphorylation may be the result of sumoylation of STAT1 'Lys-703'. Mono-ADP-ribosylates STAT6; enhancing STAT6-dependent transcription. In macrophages, positively regulates MRC1 expression in response to IL4 stimulation by promoting STAT6 phosphorylation. Mono-ADP-ribosylates PARP9. The polypeptide is Protein mono-ADP-ribosyltransferase PARP14 (Homo sapiens (Human)).